A 177-amino-acid polypeptide reads, in one-letter code: Peptide methionine sulfoxide reductase MsrA (177 aa).

Residue Cys-15 is part of the active site.

The protein belongs to the MsrA Met sulfoxide reductase family.

It catalyses the reaction L-methionyl-[protein] + [thioredoxin]-disulfide + H2O = L-methionyl-(S)-S-oxide-[protein] + [thioredoxin]-dithiol. The catalysed reaction is [thioredoxin]-disulfide + L-methionine + H2O = L-methionine (S)-S-oxide + [thioredoxin]-dithiol. Functionally, has an important function as a repair enzyme for proteins that have been inactivated by oxidation. Catalyzes the reversible oxidation-reduction of methionine sulfoxide in proteins to methionine. The protein is Peptide methionine sulfoxide reductase MsrA of Listeria monocytogenes serotype 4a (strain HCC23).